A 475-amino-acid chain; its full sequence is Tetratricopeptide repeat protein 29 (475 aa).

TPR repeat units lie at residues 92–131, 136–173, 182–215, 234–267, 274–307, 314–347, and 354–387; these read DALREAARVRSLFWLQKPLEEQPDKLDYFYHYLTRAEDAE, FEDVYNNLYALACYFNNPEDKWVRNHFYERCFKIAQLI, AEAHMHMGLLYEEDGQLLEAAEHYEAFHQLTQGR, LRTYRLLSDKMLQNKEYKQAIKILIKASEIAKEG, GEASYYLGLAHLAAEEYETALTVLDTYCKISTEL, GRAYEAIAKVLQSQGNTTEAIKYLKKFVKIARNN, and VRASTMLGDIYNEKGHYNKASQRFQQAFDTTVEL. Residues 436 to 475 form a disordered region; sequence DIEPDPVTEEFRGSTVETVSQNSEHLEELSRFPGDQKNET. Basic and acidic residues predominate over residues 459 to 475; that stretch reads EHLEELSRFPGDQKNET.

It localises to the cytoplasm. Its subcellular location is the cytoskeleton. The protein resides in the flagellum axoneme. Axonemal protein which is implicated in axonemal and/or peri-axonemal structure assembly and regulates flagellum assembly and beating and therefore sperm motility. The polypeptide is Tetratricopeptide repeat protein 29 (TTC29) (Macaca fascicularis (Crab-eating macaque)).